The chain runs to 432 residues: Ornithine aminotransferase, mitochondrial (432 aa).

The residue at position 287 (Lys-287) is an N6-(pyridoxal phosphate)lysine.

This sequence belongs to the class-III pyridoxal-phosphate-dependent aminotransferase family. As to quaternary structure, homotetramer. It depends on pyridoxal 5'-phosphate as a cofactor.

It is found in the mitochondrion matrix. It catalyses the reaction a 2-oxocarboxylate + L-ornithine = L-glutamate 5-semialdehyde + an L-alpha-amino acid. Its pathway is amino-acid biosynthesis; L-proline biosynthesis; L-glutamate 5-semialdehyde from L-ornithine: step 1/1. This chain is Ornithine aminotransferase, mitochondrial (Oat), found in Drosophila ananassae (Fruit fly).